The chain runs to 137 residues: Insulin-like peptide 2 (137 aa).

The N-terminal stretch at 1-26 is a signal peptide; it reads MSKPLSFISMVAVILLASSTVKLAQG. 3 disulfide bridges follow: cysteine 29–cysteine 119, cysteine 41–cysteine 132, and cysteine 118–cysteine 123. A propeptide spans 53-104 (connecting peptide); sequence AMPGADSDLDALNPLQFVQEFEEEDNSISEPLRSALFPGSYLGGVLNSLAEV.

It belongs to the insulin family. As to quaternary structure, heterodimer of a B chain and an A chain linked by two disulfide bonds. As to expression, broadly expressed at a low level in the embryonic mesoderm, beginning at stage 12. Expressed at a high level in the embryonic anterior midgut, with expression diminishing at late stage 16. Expressed at a low level in larval imaginal disks. Expressed at a high level in larval salivary glands and in seven cells of each larval brain hemisphere that may correspond to neurosecretory cells.

It is found in the secreted. Its function is as follows. Possible ligand of InR/insulin-like receptor. In terms of biological role, plays a role in regulating body size by increasing cell size and cell number of individual organs. Probably mediates its growth effects by acting as a ligand for the insulin receptor and transducing a signal via the Chico/PI3K/Akt(PKB) pathway. In Drosophila melanogaster (Fruit fly), this protein is Insulin-like peptide 2.